We begin with the raw amino-acid sequence, 370 residues long: Ubiquitin-binding protein Rv1468c (370 aa).

The tract at residues 1 to 72 (MSFVVANTEF…QVLSAQAAAF (72 aa)) is UBA. Residues 1–93 (MSFVVANTEF…AQAYAAAEAT (93 aa)) form the PE domain.

The protein belongs to the mycobacterial PE family. PGRS subfamily. In terms of assembly, interacts directly with host polyubiquitin in a UBA-dependent manner.

The protein localises to the secreted. It is found in the cell wall. The protein resides in the cell surface. Functionally, mediates direct binding of host ubiquitin (Ub) to the mycobacterial surface, which triggers host xenophagy. Interaction between Rv1468c and ubiquitin recruits autophagy receptor p62 to deliver mycobacteria into LC3-associated autophagosomes. It could be a viable evolutionary strategy adopted by M.tuberculosis to maintain long-term intracellular survival through self-controlling its intracellular bacterial loads to avoid excessive host inflammatory immune responses. This is Ubiquitin-binding protein Rv1468c from Mycobacterium tuberculosis (strain ATCC 25618 / H37Rv).